A 777-amino-acid polypeptide reads, in one-letter code: MDSKESLTPGKEENPSSVLTQERGNVMDFCKILRGGATLKVSVSSTSLAAASQSDPKQQRLLVDFPKGSVSNVQQPDLSKAVSLSMGLYMGETETKVMGNDLGFPQQGQISLSSGETDLQLLEESIANLNRSTSVPENPKSSASSSVSAAPKEKEFPKTHSDVSSEQQNLKGQTGTNGGNVKLYTADQSTFDILQDLEFSSGSPGKERNQSPWRSDLLIDENCLLSPLAGEEDSFLLEGNSNEDCKPLILPDTKPKIKDNGDLVLSSSSNVTLPQVKTEKEDFIELCTPGVIKQEKLSTVYCQASFPGANIIGNKMSAISIHGVSTSGGQMYHYDMNTASLSQQQDQKPIFNVIPPIPVGSENWNRCQGSGDDNLTSLGTLNFPGRTVFSNGYSSPSMRPDVSSPPSSSSTATTGPPPKLCLVCSDEASGCHYGVLTCGSCKVFFKRAVEGQHNYLCAGRNDCIIDKIRRKNCPACRYRKCLQAGMNLEARKTKKKIKGIQQATTGVSQETSENPANKTIVPATLPQLTPTLVSLLEVIEPEVLYAGYDSTVPDSTWRIMTTLNMLGGRQVIAAVKWAKAIPGFRNLHLDDQMTLLQYSWMFLMAFALGWRSYRQASSNLLCFAPDLIINEQRMTLPCMYDQCKHMLYVSSELHRLQVSYEEYLCMKTLLLLSSVPKDGLKSQELFDEIRMTYIKELGKAIVKREGNSSQNWQRFYQLTKLLDSMHEVVENLLNYCFQTFLDKTMSIEFPEMLAEIITNQLPKYSNGNIKKLLFHQK.

Positions 1–14 (MDSKESLTPGKEEN) are enriched in basic and acidic residues. The segment at 1–21 (MDSKESLTPGKEENPSSVLTQ) is disordered. Residues 1-420 (MDSKESLTPG…TATTGPPPKL (420 aa)) form a modulating region. At Thr-8 the chain carries Phosphothreonine. Omega-N-methylarginine is present on Arg-23. Ser-45, Ser-113, Ser-134, and Ser-141 each carry phosphoserine. A disordered region spans residues 130–182 (NRSTSVPENPKSSASSSVSAAPKEKEFPKTHSDVSSEQQNLKGQTGTNGGNVK). Over residues 134–150 (SVPENPKSSASSSVSAA) the composition is skewed to low complexity. Over residues 151-163 (PKEKEFPKTHSDV) the composition is skewed to basic and acidic residues. The segment covering 164 to 174 (SSEQQNLKGQT) has biased composition (polar residues). Residues Ser-203, Ser-211, and Ser-226 each carry the phosphoserine modification. Lys-258 participates in a covalent cross-link: Glycyl lysine isopeptide (Lys-Gly) (interchain with G-Cter in SUMO2). Position 267 is a phosphoserine (Ser-267). Residues Lys-277 and Lys-293 each participate in a glycyl lysine isopeptide (Lys-Gly) (interchain with G-Cter in SUMO); alternate cross-link. Glycyl lysine isopeptide (Lys-Gly) (interchain with G-Cter in SUMO2); alternate cross-links involve residues Lys-277 and Lys-293. Residues 394 to 414 (SSPSMRPDVSSPPSSSSTATT) are compositionally biased toward low complexity. The segment at 394-415 (SSPSMRPDVSSPPSSSSTATTG) is disordered. Phosphoserine is present on Ser-404. Residue Lys-419 forms a Glycyl lysine isopeptide (Lys-Gly) (interchain with G-Cter in ubiquitin) linkage. 2 consecutive NR C4-type zinc fingers follow at residues 421–441 (CLVC…CGSC) and 457–481 (CAGR…YRKC). The nuclear receptor DNA-binding region spans 421 to 486 (CLVCSDEASG…RYRKCLQAGM (66 aa)). 4 positions are modified to N6-acetyllysine: Lys-480, Lys-492, Lys-494, and Lys-495. Residues 485 to 777 (GMNLEARKTK…NIKKLLFHQK (293 aa)) form an interaction with CLOCK region. The interval 487-523 (NLEARKTKKKIKGIQQATTGVSQETSENPANKTIVPA) is hinge. Residues 524 to 758 (TLPQLTPTLV…FPEMLAEIIT (235 aa)) form the NR LBD domain. The interval 532–697 (LVSLLEVIEP…EIRMTYIKEL (166 aa)) is interaction with CRY1. A Glycyl lysine isopeptide (Lys-Gly) (interchain with G-Cter in SUMO) cross-link involves residue Lys-703.

This sequence belongs to the nuclear hormone receptor family. NR3 subfamily. In terms of assembly, heteromultimeric cytoplasmic complex with HSP90AA1, HSPA1A/HSPA1B, and FKBP5 or another immunophilin such as PPID, STIP1, or the immunophilin homolog PPP5C. Upon ligand binding FKBP5 dissociates from the complex and FKBP4 takes its place, thereby linking the complex to dynein and mediating transport to the nucleus, where the complex dissociates. Probably forms a complex composed of chaperones HSP90 and HSP70, co-chaperones CDC37, PPP5C, TSC1 and client protein TSC2, CDK4, AKT, RAF1 and NR3C1; this complex does not contain co-chaperones STIP1/HOP and PTGES3/p23. Directly interacts with UNC45A. Binds to DNA as a homodimer, and as heterodimer with NR3C2 or the retinoid X receptor. Binds STAT5A and STAT5B homodimers and heterodimers. Interacts with NRIP1, POU2F1, POU2F2 and TRIM28. Interacts with several coactivator complexes, including the SMARCA4 complex, CREBBP/EP300, TADA2L (Ada complex) and p160 coactivators such as NCOA2 and NCOA6. Interaction with BAG1 inhibits transactivation. Interacts with HEXIM1 and TGFB1I1. Interacts with NCOA1. Interacts with NCOA3, SMARCA4, SMARCC1, SMARCD1, and SMARCE1. Interacts with CLOCK, CRY1 and CRY2 in a ligand-dependent fashion. Interacts with CIART. Interacts with RWDD3. Interacts with UBE2I/UBC9 and this interaction is enhanced in the presence of RWDD3. Interacts with GRIP1. Interacts with NR4A3 (via nuclear receptor DNA-binding domain), represses transcription activity of NR4A3 on the POMC promoter Nur response element (NurRE). Directly interacts with PNRC2 to attract and form a complex with UPF1 and DCP1A; the interaction leads to rapid mRNA degradation. Interacts with GSK3B. Interacts with FNIP1 and FNIP2. Interacts (via C-terminus) with HNRNPU (via C-terminus). Interacts with MCM3AP. Interacts (via domain NR LBD) with HSP90AA1 and HSP90AB1. In the absence of hormonal ligand, interacts with TACC1. Interacts (via NR LBD domain) with ZNF764 (via KRAB domain); the interaction regulates transcription factor activity of NR3C1 by directing its actions toward certain biologic pathways. In terms of processing, acetylation by CLOCK reduces its binding to glucocorticoid response elements and its transcriptional activity. Increased proteasome-mediated degradation in response to glucocorticoids. Post-translationally, phosphorylated in the absence of hormone; becomes hyperphosphorylated in the presence of glucocorticoid. The Ser-203, Ser-226 and Ser-404-phosphorylated forms are mainly cytoplasmic, and the Ser-211-phosphorylated form is nuclear. Phosphorylation at Ser-211 increases transcriptional activity. Phosphorylation at Ser-203, Ser-226 and Ser-404 decreases signaling capacity. Phosphorylation at Ser-404 may protect from glucocorticoid-induced apoptosis. Phosphorylation at Ser-203 and Ser-211 is not required in regulation of chromosome segregation. May be dephosphorylated by PPP5C, attenuates NR3C1 action. In terms of processing, ubiquitinated by UBR5, leading to its degradation: UBR5 specifically recognizes and binds ligand-bound NR3C1 when it is not associated with coactivators (NCOAs). In presence of NCOAs, the UBR5-degron is not accessible, preventing its ubiquitination and degradation. Sumoylation at Lys-277 and Lys-293 negatively regulates its transcriptional activity. Sumoylation at Lys-703 positively regulates its transcriptional activity in the presence of RWDD3. Sumoylation at Lys-277 and Lys-293 is dispensable whereas sumoylation at Lys-703 is critical for the stimulatory effect of RWDD3 on its transcriptional activity. Heat shock increases sumoylation in a RWDD3-dependent manner. Within the infant and adult hippocampal formation, highest expression observed in the DG granule cell layer with moderate levels in the DG hilus, the CA2-CA4 pyramidal cell layer and the proximal part of the CA1 pyramidal cell layer. Moderate to high expression levels found in the presubiculum and in its' superficial layers. Weak but specific expression detected throughout the entire corticle mantle. In the amygdala, moderate levels were detected in the lateral, central and medial nuclei. Moderate expression levels were present in the PVNh alongside the third ventricle.

The protein resides in the cytoplasm. The protein localises to the nucleus. Its subcellular location is the mitochondrion. It localises to the cytoskeleton. It is found in the spindle. The protein resides in the microtubule organizing center. The protein localises to the centrosome. Its subcellular location is the chromosome. It localises to the nucleoplasm. Functionally, receptor for glucocorticoids (GC). Has a dual mode of action: as a transcription factor that binds to glucocorticoid response elements (GRE), both for nuclear and mitochondrial DNA, and as a modulator of other transcription factors. Affects inflammatory responses, cellular proliferation and differentiation in target tissues. Involved in chromatin remodeling. Plays a role in rapid mRNA degradation by binding to the 5' UTR of target mRNAs and interacting with PNRC2 in a ligand-dependent manner which recruits the RNA helicase UPF1 and the mRNA-decapping enzyme DCP1A, leading to RNA decay. Could act as a coactivator for STAT5-dependent transcription upon growth hormone (GH) stimulation and could reveal an essential role of hepatic GR in the control of body growth. Mediates glucocorticoid-induced apoptosis. Promotes accurate chromosome segregation during mitosis. May act as a tumor suppressor. May play a negative role in adipogenesis through the regulation of lipolytic and antilipogenic gene expression. In Callithrix jacchus (White-tufted-ear marmoset), this protein is Glucocorticoid receptor (NR3C1).